Consider the following 207-residue polypeptide: Heat shock protein beta-1 (207 aa).

Residue Arg-12 is modified to Omega-N-methylarginine. Phosphoserine is present on Ser-13. Ser-15 is modified (phosphoserine; by MAPKAPK2 and MAPKAPK3). Ser-27 bears the Phosphoserine mark. The interaction with TGFB1I1 stretch occupies residues 72 to 207 (APAYSRLLSR…AGKSEKPGTK (136 aa)). The sHSP domain occupies 78 to 186 (LLSRQLSSGV…QSAEITIPVT (109 aa)). Ser-80 and Ser-84 each carry phosphoserine; by MAPKAPK2, MAPKAPK3 and MAPKAPK5. Residues Ser-85, Ser-88, and Ser-100 each carry the phosphoserine modification. Lys-125 carries the N6-acetyllysine modification. A disordered region spans residues 151 to 181 (DPTQVSSSLSPEGTLSVEAPLPKPATQSAEI). Polar residues predominate over residues 153 to 163 (TQVSSSLSPEG). Phosphothreonine is present on Thr-176. Ser-178 and Ser-201 each carry phosphoserine.

Belongs to the small heat shock protein (HSP20) family. As to quaternary structure, homooligomer. Homodimer; becomes monomeric upon activation. Heterooligomer; with HSPB6. Associates with alpha- and beta-tubulin. Interacts with TGFB1I1. Interacts with CRYAB. Interacts with HSPB8. Interacts with HSPBAP1. In terms of processing, phosphorylated upon exposure to protein kinase C activators and heat shock. Phosphorylation by MAPKAPK2 and MAPKAPK3 in response to stress dissociates HSPB1 from large small heat-shock protein (sHsps) oligomers and impairs its chaperone activity and ability to protect against oxidative stress effectively. Phosphorylation by MAPKAPK5 in response to PKA stimulation induces F-actin rearrangement.

It localises to the cytoplasm. The protein resides in the nucleus. The protein localises to the cytoskeleton. It is found in the spindle. Small heat shock protein which functions as a molecular chaperone probably maintaining denatured proteins in a folding-competent state. Plays a role in stress resistance and actin organization. Through its molecular chaperone activity may regulate numerous biological processes including the phosphorylation and the axonal transport of neurofilament proteins. In Sus scrofa (Pig), this protein is Heat shock protein beta-1 (HSPB1).